The primary structure comprises 474 residues: MTLKIAFFTLILLVSIERVYSSDEEYRLLKDLREGYDPVERPVADHRKPVNVKLRLILQQLVDVDERNQVITLVVWNQYTWNDYKLRWSPEEYGNITTLQIPHGTLWKPDILLFNSANEHFDASFPVHMVVSSNGDVLFAPPGIVSFSCSLSMTWFPYDQQVCYLKFGSWTYGKKLDLQIDDSDLPDGHKMDLQYYIPNGEFDLLATPAFRKSTTFLDETYVELYFHMHLKRRTMYYGLNWIVPSILISLSNILGFTMPPECGEKITLQITNFLSVMVFLAMVSEVAPPTSESIPIIAAFFSLSIVILGLSICASLIIVNIFFRHPKTHRMGDWTRYVFLEWLPWFLLMSRPEHTFCRPRREEEKNDEEAGGDGTKLLENQQHQPRPRLLVNSQLVMDSTVPYLEEIIGYLKVFKAKLDDDEEEEEEILNWRFMAMVIDRLSLFLFTGLIFGTTALIFAFCPNLFTDSPIVDIE.

The signal sequence occupies residues 1 to 21 (MTLKIAFFTLILLVSIERVYS). The Extracellular portion of the chain corresponds to 22-237 (SDEEYRLLKD…MHLKRRTMYY (216 aa)). N95 carries N-linked (GlcNAc...) asparagine glycosylation. C149 and C163 are disulfide-bonded. The next 3 helical transmembrane spans lie at 238 to 258 (GLNW…GFTM), 266 to 286 (ITLQ…VSEV), and 303 to 323 (LSIV…NIFF). At 324–440 (RHPKTHRMGD…WRFMAMVIDR (117 aa)) the chain is on the cytoplasmic side. The tract at residues 359 to 378 (PRREEEKNDEEAGGDGTKLL) is disordered. A helical transmembrane segment spans residues 441-461 (LSLFLFTGLIFGTTALIFAFC).

Belongs to the ligand-gated ion channel (TC 1.A.9) family. Acetylcholine receptor (TC 1.A.9.1) subfamily. In terms of assembly, neuronal AChR seems to be composed of two different type of subunits: alpha and beta. As to expression, expressed in pharyngeal muscle.

Its subcellular location is the postsynaptic cell membrane. The protein localises to the cell membrane. In terms of biological role, after binding acetylcholine, the AChR responds by an extensive change in conformation that affects all subunits and leads to opening of an ion-conducting channel across the plasma membrane. Nicotinic acetylcholine receptor in the MC pharyngeal motor neuron involved in pharyngeal pumping. Has a role in the determination of life span possibly via calorific restriction which affects growth rate, although this is independent of metabolic activity. Plays a role in the defense against the accumulation of ingested live pathogenic bacteria in the intestine. The sequence is that of Neuronal acetylcholine receptor subunit eat-2 from Caenorhabditis elegans.